The following is a 155-amino-acid chain: SsrA-binding protein (155 aa).

Belongs to the SmpB family.

Its subcellular location is the cytoplasm. Required for rescue of stalled ribosomes mediated by trans-translation. Binds to transfer-messenger RNA (tmRNA), required for stable association of tmRNA with ribosomes. tmRNA and SmpB together mimic tRNA shape, replacing the anticodon stem-loop with SmpB. tmRNA is encoded by the ssrA gene; the 2 termini fold to resemble tRNA(Ala) and it encodes a 'tag peptide', a short internal open reading frame. During trans-translation Ala-aminoacylated tmRNA acts like a tRNA, entering the A-site of stalled ribosomes, displacing the stalled mRNA. The ribosome then switches to translate the ORF on the tmRNA; the nascent peptide is terminated with the 'tag peptide' encoded by the tmRNA and targeted for degradation. The ribosome is freed to recommence translation, which seems to be the essential function of trans-translation. The protein is SsrA-binding protein of Bacillus cereus (strain G9842).